The sequence spans 339 residues: DNA-directed RNA polymerase subunit alpha (339 aa).

An alpha N-terminal domain (alpha-NTD) region spans residues 1–233 (MVREEVAGST…DLFLPFLHAE (233 aa)). The tract at residues 264–339 (KKGIPLNCIF…IDLLKNKLSF (76 aa)) is alpha C-terminal domain (alpha-CTD).

This sequence belongs to the RNA polymerase alpha chain family. In terms of assembly, in plastids the minimal PEP RNA polymerase catalytic core is composed of four subunits: alpha, beta, beta', and beta''. When a (nuclear-encoded) sigma factor is associated with the core the holoenzyme is formed, which can initiate transcription.

It is found in the plastid. It localises to the chloroplast. It carries out the reaction RNA(n) + a ribonucleoside 5'-triphosphate = RNA(n+1) + diphosphate. In terms of biological role, DNA-dependent RNA polymerase catalyzes the transcription of DNA into RNA using the four ribonucleoside triphosphates as substrates. The protein is DNA-directed RNA polymerase subunit alpha of Thinopyrum elongatum (Tall wheatgrass).